We begin with the raw amino-acid sequence, 277 residues long: Probable septum site-determining protein MinC (277 aa).

The disordered stretch occupies residues 107–168; sequence TEGLLPGRKG…ESGPQVSHYD (62 aa). Residues 122 to 142 show a composition bias toward basic and acidic residues; sequence GKPDGKAAEGRAPDHGTEGRA.

Belongs to the MinC family. Interacts with MinD and FtsZ.

Functionally, cell division inhibitor that blocks the formation of polar Z ring septums. Rapidly oscillates between the poles of the cell to destabilize FtsZ filaments that have formed before they mature into polar Z rings. Prevents FtsZ polymerization. This chain is Probable septum site-determining protein MinC, found in Mesorhizobium japonicum (strain LMG 29417 / CECT 9101 / MAFF 303099) (Mesorhizobium loti (strain MAFF 303099)).